The primary structure comprises 259 residues: Thiazole synthase (259 aa).

The Schiff-base intermediate with DXP role is filled by Lys-102. Residues Gly-163, 189–190 (AG), and 211–212 (NT) contribute to the 1-deoxy-D-xylulose 5-phosphate site.

Belongs to the ThiG family. As to quaternary structure, homotetramer. Forms heterodimers with either ThiH or ThiS.

The protein localises to the cytoplasm. It catalyses the reaction [ThiS sulfur-carrier protein]-C-terminal-Gly-aminoethanethioate + 2-iminoacetate + 1-deoxy-D-xylulose 5-phosphate = [ThiS sulfur-carrier protein]-C-terminal Gly-Gly + 2-[(2R,5Z)-2-carboxy-4-methylthiazol-5(2H)-ylidene]ethyl phosphate + 2 H2O + H(+). It participates in cofactor biosynthesis; thiamine diphosphate biosynthesis. In terms of biological role, catalyzes the rearrangement of 1-deoxy-D-xylulose 5-phosphate (DXP) to produce the thiazole phosphate moiety of thiamine. Sulfur is provided by the thiocarboxylate moiety of the carrier protein ThiS. In vitro, sulfur can be provided by H(2)S. The protein is Thiazole synthase of Novosphingobium aromaticivorans (strain ATCC 700278 / DSM 12444 / CCUG 56034 / CIP 105152 / NBRC 16084 / F199).